Consider the following 122-residue polypeptide: Large ribosomal subunit protein uL14 (122 aa).

It belongs to the universal ribosomal protein uL14 family. Part of the 50S ribosomal subunit. Forms a cluster with proteins L3 and L19. In the 70S ribosome, L14 and L19 interact and together make contacts with the 16S rRNA in bridges B5 and B8.

Functionally, binds to 23S rRNA. Forms part of two intersubunit bridges in the 70S ribosome. The sequence is that of Large ribosomal subunit protein uL14 from Desulfatibacillum aliphaticivorans.